A 485-amino-acid polypeptide reads, in one-letter code: Rhamnulokinase (485 aa).

12-16 (ATSGR) contacts ATP. Residues Gly-80 and 238–240 (HDT) contribute to the substrate site. Asp-239 functions as the Proton acceptor in the catalytic mechanism. Residue Thr-261 coordinates ATP. Residue Asn-298 participates in substrate binding. Glu-306 contributes to the ATP binding site. Cys-355 and Cys-372 form a disulfide bridge. Position 404 (Gly-404) interacts with ATP.

The protein belongs to the rhamnulokinase family. Requires Mg(2+) as cofactor.

It catalyses the reaction L-rhamnulose + ATP = L-rhamnulose 1-phosphate + ADP + H(+). It participates in carbohydrate degradation; L-rhamnose degradation; glycerone phosphate from L-rhamnose: step 2/3. In terms of biological role, involved in the catabolism of L-rhamnose (6-deoxy-L-mannose). Catalyzes the transfer of the gamma-phosphate group from ATP to the 1-hydroxyl group of L-rhamnulose to yield L-rhamnulose 1-phosphate. The polypeptide is Rhamnulokinase (Bacteroides thetaiotaomicron (strain ATCC 29148 / DSM 2079 / JCM 5827 / CCUG 10774 / NCTC 10582 / VPI-5482 / E50)).